The chain runs to 649 residues: FAS-associated factor 1 (649 aa).

Positions 1 to 57 (MASNMDREMILADFQACTGIENIDEAITLLEQNNWDLVAAINGVIPQENGILQSDFG) constitute a UBA domain. 2 disordered regions span residues 56–84 (FGGE…SAFR) and 266–290 (RRTS…VSDS). The span at 68–82 (PASHPAPASTPSSSA) shows a compositional bias: low complexity. Ser-319 carries the post-translational modification Phosphoserine. In terms of domain architecture, UBX spans 568–645 (NAEPVSKLRI…NLFPQETLFL (78 aa)). The residue at position 579 (Thr-579) is a Phosphothreonine. The residue at position 581 (Ser-581) is a Phosphoserine.

As to quaternary structure, interacts with CDT1 and ATPase VCP/p97. Interacts (via UBA domain) with FAS (via death domain). Interacts (via UBA domain) with NLRP12 (via DAPIN/PYRIN domain).

The protein localises to the nucleus. Functionally, ubiquitin-binding protein. Required for the progression of DNA replication forks by targeting DNA replication licensing factor CDT1 for degradation. Potentiates but cannot initiate FAS-induced apoptosis. The sequence is that of FAS-associated factor 1 (Faf1) from Mus musculus (Mouse).